The chain runs to 343 residues: Biotin synthase (343 aa).

The Radical SAM core domain maps to 36–254 (RQVQVSTLLS…IAVARIMMPR (219 aa)). C51, C55, and C58 together coordinate [4Fe-4S] cluster. Residues C95, C126, C186, and R258 each contribute to the [2Fe-2S] cluster site.

It belongs to the radical SAM superfamily. Biotin synthase family. Homodimer. It depends on [4Fe-4S] cluster as a cofactor. [2Fe-2S] cluster serves as cofactor.

The catalysed reaction is (4R,5S)-dethiobiotin + (sulfur carrier)-SH + 2 reduced [2Fe-2S]-[ferredoxin] + 2 S-adenosyl-L-methionine = (sulfur carrier)-H + biotin + 2 5'-deoxyadenosine + 2 L-methionine + 2 oxidized [2Fe-2S]-[ferredoxin]. It functions in the pathway cofactor biosynthesis; biotin biosynthesis; biotin from 7,8-diaminononanoate: step 2/2. Catalyzes the conversion of dethiobiotin (DTB) to biotin by the insertion of a sulfur atom into dethiobiotin via a radical-based mechanism. The polypeptide is Biotin synthase (Erwinia tasmaniensis (strain DSM 17950 / CFBP 7177 / CIP 109463 / NCPPB 4357 / Et1/99)).